Reading from the N-terminus, the 87-residue chain is Keratin-associated protein 7-1 (87 aa).

Residues 43 to 84 form an 11 X 2 AA repeats of G-[YCGS] region; the sequence is GCGCNGYSSLGYSFGGSNINNLGGCYGGSFYRPWGSGSGFGY.

This sequence belongs to the KRTAP type 7 family. In terms of assembly, interacts with hair keratins. As to expression, expressed in the upper portion of the hair cortex.

Its function is as follows. In the hair cortex, hair keratin intermediate filaments are embedded in an interfilamentous matrix, consisting of hair keratin-associated proteins (KRTAP), which are essential for the formation of a rigid and resistant hair shaft through their extensive disulfide bond cross-linking with abundant cysteine residues of hair keratins. The matrix proteins include the high-sulfur and high-glycine-tyrosine keratins. In Homo sapiens (Human), this protein is Keratin-associated protein 7-1 (KRTAP7-1).